A 145-amino-acid polypeptide reads, in one-letter code: D-aminoacyl-tRNA deacylase (145 aa).

The short motif at G137–P138 is the Gly-cisPro motif, important for rejection of L-amino acids element.

This sequence belongs to the DTD family. As to quaternary structure, homodimer.

Its subcellular location is the cytoplasm. The enzyme catalyses glycyl-tRNA(Ala) + H2O = tRNA(Ala) + glycine + H(+). It carries out the reaction a D-aminoacyl-tRNA + H2O = a tRNA + a D-alpha-amino acid + H(+). In terms of biological role, an aminoacyl-tRNA editing enzyme that deacylates mischarged D-aminoacyl-tRNAs. Also deacylates mischarged glycyl-tRNA(Ala), protecting cells against glycine mischarging by AlaRS. Acts via tRNA-based rather than protein-based catalysis; rejects L-amino acids rather than detecting D-amino acids in the active site. By recycling D-aminoacyl-tRNA to D-amino acids and free tRNA molecules, this enzyme counteracts the toxicity associated with the formation of D-aminoacyl-tRNA entities in vivo and helps enforce protein L-homochirality. This is D-aminoacyl-tRNA deacylase from Serratia proteamaculans (strain 568).